Reading from the N-terminus, the 69-residue chain is uncharacterized protein (69 aa).

This is an uncharacterized protein from Escherichia coli O6:H1 (strain CFT073 / ATCC 700928 / UPEC).